A 1325-amino-acid chain; its full sequence is Sperm-specific sodium:proton exchanger (1325 aa).

The first 29 residues, 1–29, serve as a signal peptide directing secretion; the sequence is MKKRVVKLRELVPAVAALAVAVLIQSATG. The disordered stretch occupies residues 28–68; that stretch reads TGSSGGSGHTPTTQATHADDHDLTTHNGTEEHDDGHDDGHD. The Extracellular portion of the chain corresponds to 30–76; sequence SSGGSGHTPTTQATHADDHDLTTHNGTEEHDDGHDDGHDDLHAHAPK. Basic and acidic residues predominate over residues 44 to 68; the sequence is HADDHDLTTHNGTEEHDDGHDDGHD. His-73 provides a ligand contact to a 1,2-diacylglycero-3-phosphate. Residues 77-96 form a helical membrane-spanning segment; that stretch reads VIVFISGSCLFGAISRSLFK. At 97–101 the chain is on the cytoplasmic side; that stretch reads KLPIP. The helical transmembrane segment at 102 to 119 threads the bilayer; the sequence is YTVVLLILGAILGVVASN. The Extracellular portion of the chain corresponds to 120-135; sequence VPLVEEHTRDVAHMDP. Residues 136 to 152 traverse the membrane as a helical segment; that stretch reads HVLLQIFLPVLIFESAF. Topologically, residues 153 to 162 are cytoplasmic; the sequence is AMDVHTFMRS. A helical transmembrane segment spans residues 163–188; the sequence is FSQVCILALFGLVVASVLTAVLAMNL. A transport core domain region spans residues 163–250; it reads FSQVCILALF…AIVIFNVFMK (88 aa). Residues 189 to 194 lie on the Extracellular side of the membrane; the sequence is FNYNWN. A helical membrane pass occupies residues 195–220; it reads FSEAMMFGAIMSATDPVAVVALLKDL. Residues 221 to 223 are Cytoplasmic-facing; it reads GAS. Residues 224-249 form a helical membrane-spanning segment; it reads KQLGTIIEGESLLNDGCAIVIFNVFM. Residues 237-238 carry the Essential for sodium:proton exchange motif; it reads ND. The Extracellular portion of the chain corresponds to 250-260; it reads KMVFFPQLTST. A helical membrane pass occupies residues 261-292; that stretch reads VGQNVLYFLQVAVAGPLWGYAVAKVTVFFLSH. Residues 293–296 are Cytoplasmic-facing; that stretch reads IFND. Residues 297–319 traverse the membrane as a helical segment; the sequence is ALVEITITLAATYLTYYIGDIWL. Residues 320 to 322 lie on the Extracellular side of the membrane; it reads EVS. A helical membrane pass occupies residues 323–336; the sequence is GVLAVVVLGLIVNA. The Cytoplasmic segment spans residues 337–343; sequence EKTSISP. The chain crosses the membrane as a helical span at residues 344 to 377; the sequence is EVEVFLHRFWEMLAYLANTLIFMMVGVVVTQKAL. Residues 378–382 are Extracellular-facing; it reads VAVDK. A helical transmembrane segment spans residues 383 to 412; sequence MDWFYLIILYLAITIIRGMVISLFSPILSR. The transport core domain stretch occupies residues 383 to 481; the sequence is MDWFYLIILY…TTIQTLLRIL (99 aa). Residues 413 to 418 lie on the Cytoplasmic side of the membrane; it reads IGYGLT. A helical transmembrane segment spans residues 419–446; it reads WRNAVIMTWGGLRGAVGLALALVVENLA. The Extracellular portion of the chain corresponds to 447 to 450; sequence GNDV. The chain crosses the membrane as a helical span at residues 451–481; the sequence is IGSKFLFHTAGIVVLTLVINATTIQTLLRIL. At 482–677 the chain is on the cytoplasmic side; that stretch reads GMSDISIPKR…GKLMYKICHH (196 aa). Residues 575 to 620 form an interacts with the S4 segment of voltage sensor domain region; sequence FADMMEEARLRMLKAEKISYWKQFEHGMLAREALRLLVQHAEVAAD. The interval 605–620 is interacts with the transport core domain; can lock the transporter in the inward conformation; sequence REALRLLVQHAEVAAD. Residues 678–708 form a helical membrane-spanning segment; that stretch reads MAFEVTINIAIVLNIVPIIMEFVVQDKMASV. Residues 709–724 are Extracellular-facing; it reads STMAAPGSTVSSEPSS. A helical membrane pass occupies residues 725–752; sequence LQKIEDALRISNYVFFVIYAIEAIVKIL. Residues 753-760 lie on the Cytoplasmic side of the membrane; the sequence is GLGRHYIV. Residues 761-784 form a helical membrane-spanning segment; that stretch reads SHWNKFDAFILVVALVDIIIAETL. The Extracellular portion of the chain corresponds to 785 to 795; that stretch reads LKGSITINLSS. A helical membrane pass occupies residues 796 to 822; the sequence is IKVVKLFRLLRGLRMLRLTKALIPKLI. The tract at residues 796 to 857 is S4 segment of voltage sensor domain; it reads IKVVKLFRLL…EEVGKIIDRM (62 aa). The Cytoplasmic segment spans residues 823-1325; sequence LVVNGKINNQ…EEGAAPRVNV (503 aa). The interval 860–919 is interacts with the S4 segment of voltage sensor domain; sequence NKKILRELKHISETGRLQVVKELGLLQREHPGIAVSVKTRQAIRTILNHSRETIHELQGA. Residues 968–1068 form a cNMP-binding domain region; it reads KLIDFIKARA…CETTVQVYFI (101 aa). Gly-1043 contacts 3',5'-cyclic AMP. 3',5'-cyclic GMP contacts are provided by Gly-1043, Glu-1044, and Met-1045. Residues Met-1045, Gly-1046, Arg-1053, and Asn-1054 each coordinate 3',5'-cyclic AMP. Arg-1053 and Asn-1054 together coordinate 3',5'-cyclic GMP. The segment at 1237 to 1325 is disordered; it reads MLSRKSSGAA…EEGAAPRVNV (89 aa). A compositionally biased stretch (low complexity) spans 1266–1280; that stretch reads VSPSVPTKTTPKPKS.

It belongs to the monovalent cation:proton antiporter 1 (CPA1) transporter (TC 2.A.36) family. In terms of assembly, homodimer; the dimerization is stabilized in the presence of phosphatidic acids.

The protein resides in the cell projection. Its subcellular location is the cilium. It is found in the flagellum membrane. The enzyme catalyses Na(+)(in) + H(+)(out) = Na(+)(out) + H(+)(in). Its activity is regulated as follows. Gated by voltage and stimulated by cyclic nucleotides which shift the activation voltage closer to resting membrane potential. Not inhibited by common sodium:proton exchanger inhibitors such as amiloride. In terms of biological role, electroneutral sodium:proton antiporter that regulates intracellular pH of sperm along with capacitation and fertility. Activated in response to egg-derived chemoattractants, couples membrane voltage to sodium:proton exchange and transduces membrane hyperpolarization to cytoplasmic alkalization to cAMP signaling and ultimately to sperm motility. The protein is Sperm-specific sodium:proton exchanger of Strongylocentrotus purpuratus (Purple sea urchin).